The chain runs to 58 residues: MKRQKRDRLERARTKGYQAGLAGRSKELCPYQCIDARGYWLGGWRDAVDERSQGYMVN.

The protein belongs to the ribosome modulation factor family.

The protein localises to the cytoplasm. During stationary phase, converts 70S ribosomes to an inactive dimeric form (100S ribosomes). This Tolumonas auensis (strain DSM 9187 / NBRC 110442 / TA 4) protein is Ribosome modulation factor.